A 136-amino-acid polypeptide reads, in one-letter code: Large ribosomal subunit protein uL16c (136 aa).

It belongs to the universal ribosomal protein uL16 family. Part of the 50S ribosomal subunit.

Its subcellular location is the plastid. The protein resides in the chloroplast. The sequence is that of Large ribosomal subunit protein uL16c from Saccharum hybrid (Sugarcane).